Reading from the N-terminus, the 232-residue chain is uncharacterized protein (232 aa).

Residues 1–46 form a disordered region; the sequence is MNAHNMRGPPGDLAKVVPGSRSGWNEGSRCRQADKGDGQCRNGGRD. Residues 28-46 show a composition bias toward basic and acidic residues; it reads SRCRQADKGDGQCRNGGRD.

This is an uncharacterized protein from Rhizobium meliloti (Ensifer meliloti).